The chain runs to 282 residues: Shikimate dehydrogenase (NADP(+)) (282 aa).

Shikimate-binding positions include 15–17 (SKS) and Thr-62. Catalysis depends on Lys-66, which acts as the Proton acceptor. Residues Asn-87 and Asp-103 each contribute to the shikimate site. NADP(+)-binding positions include 128–132 (GAGGA), 152–157 (NRTPAK), and Met-216. Tyr-218 contacts shikimate. Gly-240 serves as a coordination point for NADP(+).

The protein belongs to the shikimate dehydrogenase family. As to quaternary structure, homodimer.

The enzyme catalyses shikimate + NADP(+) = 3-dehydroshikimate + NADPH + H(+). It functions in the pathway metabolic intermediate biosynthesis; chorismate biosynthesis; chorismate from D-erythrose 4-phosphate and phosphoenolpyruvate: step 4/7. Involved in the biosynthesis of the chorismate, which leads to the biosynthesis of aromatic amino acids. Catalyzes the reversible NADPH linked reduction of 3-dehydroshikimate (DHSA) to yield shikimate (SA). The sequence is that of Shikimate dehydrogenase (NADP(+)) from Nitrosococcus oceani (strain ATCC 19707 / BCRC 17464 / JCM 30415 / NCIMB 11848 / C-107).